Consider the following 1328-residue polypeptide: ABC transporter G family member 2 (1328 aa).

The ABC transporter 1 domain occupies 53-299; the sequence is VTARNLSMSI…FEGLGFKLPK (247 aa). 91-98 is an ATP binding site; it reads GSPGCGKT. Positions 388-665 constitute an ABC transmembrane type-2 1 domain; sequence ISSQVAVRMR…FGMYFFLKNV (278 aa). 7 helical membrane passes run 398–418, 428–448, 477–497, 504–524, 534–554, 559–579, and 642–662; these read IIKS…LDLN, LIFF…AILF, IPIA…MCGL, FIYF…FFKM, LASV…GFMA, IGGW…FEGL, and IDLL…YFFL. The disordered stretch occupies residues 670–691; it reads RASDPKNDKRSKKASKRSKKIK. The span at 678–689 shows a compositional bias: basic residues; it reads KRSKKASKRSKK. The ABC transporter 2 domain occupies 721–960; sequence VYEVDVKKDG…DLLGYFENHG (240 aa). 755–762 provides a ligand contact to ATP; the sequence is GPSGAGKS. The region spanning 1049–1286 is the ABC transmembrane type-2 2 domain; that stretch reads VRRVQNIRTR…PICPITNGNQ (238 aa). Helical transmembrane passes span 1059-1076, 1087-1107, 1128-1148, 1172-1192, 1197-1217, and 1303-1323; these read LMRS…FVRM, VSIL…SIPI, IYLF…AIIY, FISF…ATVL, IAHA…GFMI, and AVIF…LKFI.

It belongs to the ABC transporter superfamily. ABCG family. PDR (TC 3.A.1.205) subfamily.

The protein resides in the endosome membrane. Its function is as follows. Required for endocytosis and endosomal pH regulation. The polypeptide is ABC transporter G family member 2 (abcG2) (Dictyostelium discoideum (Social amoeba)).